The primary structure comprises 434 residues: 3-phosphoshikimate 1-carboxyvinyltransferase (434 aa).

Positions 22, 23, and 27 each coordinate 3-phosphoshikimate. Lys-22 is a binding site for phosphoenolpyruvate. Phosphoenolpyruvate-binding residues include Gly-93 and Arg-121. Ser-168, Ser-169, Gln-170, Ser-199, Asp-320, and Lys-347 together coordinate 3-phosphoshikimate. Position 170 (Gln-170) interacts with phosphoenolpyruvate. Asp-320 functions as the Proton acceptor in the catalytic mechanism. 3 residues coordinate phosphoenolpyruvate: Arg-351, Arg-394, and Lys-419.

This sequence belongs to the EPSP synthase family. Monomer.

The protein localises to the cytoplasm. The catalysed reaction is 3-phosphoshikimate + phosphoenolpyruvate = 5-O-(1-carboxyvinyl)-3-phosphoshikimate + phosphate. It participates in metabolic intermediate biosynthesis; chorismate biosynthesis; chorismate from D-erythrose 4-phosphate and phosphoenolpyruvate: step 6/7. In terms of biological role, catalyzes the transfer of the enolpyruvyl moiety of phosphoenolpyruvate (PEP) to the 5-hydroxyl of shikimate-3-phosphate (S3P) to produce enolpyruvyl shikimate-3-phosphate and inorganic phosphate. This chain is 3-phosphoshikimate 1-carboxyvinyltransferase, found in Burkholderia orbicola (strain AU 1054).